We begin with the raw amino-acid sequence, 423 residues long: MKPNTTNLRNECWDTFSIPKRSQNIKINQSTKHQRSISDFVGTAGPGRQVGNWIIKKTIGAGSMGKVKLVVNILTGEKAALKMIPFTPNNTSQTVRVQREALLGRLLRHPNICRVIDCIRTPACTYILFEYVPGGQLLEYILARGKLDEDLARSFAMQLINALVYLHKNFIVHRDLKIENVLLTQDSRQVKLIDFGLSNFYSKDDLLRTYCGSLYFAAPELLDAKPYIGPEVDVWSLGVVIYVMVCGRVPFDDVSVPMLHSKIKSGKLEFPSYISEDCCSLIAAMLNVNPRKRCSLEQAAKFPWLKKNSFCLYLPIPLTSIPSTPSIRSHVFKPPFNLKVLQLLHEHGLASIPELKHELYMAYIERKTTSLVCLYLLGVESLAPALRIPTALPPVYSRHQRHHSEILGAMDLTEKITAMQCPP.

Residues Ser-36 and Ser-38 each carry the phosphoserine modification. A Protein kinase domain is found at 53–305 (WIIKKTIGAG…LEQAAKFPWL (253 aa)). Residues 59–67 (IGAGSMGKV) and Lys-82 each bind ATP. Catalysis depends on Asp-175, which acts as the Proton acceptor.

Belongs to the protein kinase superfamily. Ser/Thr protein kinase family.

It localises to the cytoplasm. It carries out the reaction L-seryl-[protein] + ATP = O-phospho-L-seryl-[protein] + ADP + H(+). It catalyses the reaction L-threonyl-[protein] + ATP = O-phospho-L-threonyl-[protein] + ADP + H(+). The chain is Serine/threonine-protein kinase ppk25 (ppk25) from Schizosaccharomyces pombe (strain 972 / ATCC 24843) (Fission yeast).